A 628-amino-acid chain; its full sequence is Patulin synthase (628 aa).

The N-terminal stretch at 1–19 (MRLTSGIFHAAIAVAAVGA) is a signal peptide. N-linked (GlcNAc...) asparagine glycosylation is present at asparagine 49. Residues 61-62 (TA) and 82-83 (EA) contribute to the FAD site. An N-linked (GlcNAc...) asparagine glycan is attached at asparagine 93. Position 148-151 (148-151 (NYMA)) interacts with FAD. N-linked (GlcNAc...) asparagine glycosylation is found at asparagine 198, asparagine 261, asparagine 283, asparagine 429, asparagine 486, and asparagine 526. The active-site Proton acceptor is histidine 564. Asparagine 575 carries an N-linked (GlcNAc...) asparagine glycan. FAD is bound by residues alanine 598 and 609-610 (PQ).

This sequence belongs to the GMC oxidoreductase family. FAD serves as cofactor.

It localises to the cytoplasm. It is found in the cell cortex. Its subcellular location is the vacuole. The protein resides in the secreted. The protein localises to the cell wall. It catalyses the reaction (E)-ascladiol + A = patulin + AH2. The protein operates within mycotoxin biosynthesis; patulin biosynthesis. Functionally, patulin synthase; part of the gene cluster that mediates the biosynthesis of patulin, an acetate-derived tetraketide mycotoxin produced by several fungal species that shows antimicrobial properties against several bacteria. PatE catalyzes the last step of the pathway which is the conversion of E-ascladiol to patulin. The pathway begins with the synthesis of 6-methylsalicylic acid by the polyketide synthase (PKS) patK via condensation of acetate and malonate units. The 6-methylsalicylic acid decarboxylase patG then catalyzes the decarboxylation of 6-methylsalicylic acid to yield m-cresol (also known as 3-methylphenol). These first reactions occur in the cytosol. The intermediate m-cresol is then transported into the endoplasmic reticulum where the cytochrome P450 monooxygenase patH converts it to m-hydroxybenzyl alcohol, which is further converted to gentisyl alcohol by the cytochrome P450 monooxygenase patI. The oxidoreductases patJ and patO further convert gentisyl alcohol to isoepoxydon in the vacuole. PatN catalyzes then the transformation of isoepoxydon into phyllostine. The cluster protein patF is responsible for the conversion from phyllostine to neopatulin whereas the alcohol dehydrogenase patD converts neopatulin to E-ascladiol. The steps between isoepoxydon and E-ascladiol occur in the cytosol, and E-ascladiol is probably secreted to the extracellular space by one of the cluster-specific transporters patC or patM. Finally, the secreted patulin synthase patE catalyzes the conversion of E-ascladiol to patulin. The protein is Patulin synthase of Penicillium expansum (Blue mold rot fungus).